Consider the following 48-residue polypeptide: Osteocalcin (48 aa).

The Gla domain occupies 1-44; sequence AGTAPADLTVAQLESLKEVCEANLACEHMMDVSGIIAAYTAYYG. Ca(2+)-binding residues include glutamate 14, glutamate 18, glutamate 21, and glutamate 27. 4-carboxyglutamate occurs at positions 14, 18, and 21. Cysteine 20 and cysteine 26 form a disulfide bridge.

This sequence belongs to the osteocalcin/matrix Gla protein family. In terms of processing, gamma-carboxyglutamate residues are formed by vitamin K dependent carboxylation by GGCX. These residues are essential for the binding of calcium.

Its subcellular location is the secreted. It is found in the extracellular space. It localises to the extracellular matrix. Its function is as follows. The carboxylated form is one of the main organic components of the bone matrix, which constitutes 1-2% of the total bone protein. The carboxylated form binds strongly to apatite and calcium. The polypeptide is Osteocalcin (bglap) (Cyprinus carpio (Common carp)).